The following is a 129-amino-acid chain: Small ribosomal subunit protein uS11 (129 aa).

Belongs to the universal ribosomal protein uS11 family. Part of the 30S ribosomal subunit. Interacts with proteins S7 and S18. Binds to IF-3.

Its function is as follows. Located on the platform of the 30S subunit, it bridges several disparate RNA helices of the 16S rRNA. Forms part of the Shine-Dalgarno cleft in the 70S ribosome. This Parabacteroides distasonis (strain ATCC 8503 / DSM 20701 / CIP 104284 / JCM 5825 / NCTC 11152) protein is Small ribosomal subunit protein uS11.